We begin with the raw amino-acid sequence, 160 residues long: 6,7-dimethyl-8-ribityllumazine synthase (160 aa).

5-amino-6-(D-ribitylamino)uracil contacts are provided by residues Trp-27, 59–61 (AIE), and 81–83 (VVI). Residue 86 to 87 (QT) coordinates (2S)-2-hydroxy-3-oxobutyl phosphate. His-89 acts as the Proton donor in catalysis. Asn-114 contributes to the 5-amino-6-(D-ribitylamino)uracil binding site. Arg-128 is a binding site for (2S)-2-hydroxy-3-oxobutyl phosphate.

This sequence belongs to the DMRL synthase family. As to quaternary structure, homopentamer.

It catalyses the reaction (2S)-2-hydroxy-3-oxobutyl phosphate + 5-amino-6-(D-ribitylamino)uracil = 6,7-dimethyl-8-(1-D-ribityl)lumazine + phosphate + 2 H2O + H(+). Its pathway is cofactor biosynthesis; riboflavin biosynthesis; riboflavin from 2-hydroxy-3-oxobutyl phosphate and 5-amino-6-(D-ribitylamino)uracil: step 1/2. Catalyzes the formation of 6,7-dimethyl-8-ribityllumazine by condensation of 5-amino-6-(D-ribitylamino)uracil with 3,4-dihydroxy-2-butanone 4-phosphate. This is the penultimate step in the biosynthesis of riboflavin. The polypeptide is 6,7-dimethyl-8-ribityllumazine synthase (Mycobacterium avium (strain 104)).